Consider the following 888-residue polypeptide: Alanine--tRNA ligase (888 aa).

Zn(2+) is bound by residues H564, H568, C676, and H680.

The protein belongs to the class-II aminoacyl-tRNA synthetase family. Zn(2+) serves as cofactor.

The protein localises to the cytoplasm. It carries out the reaction tRNA(Ala) + L-alanine + ATP = L-alanyl-tRNA(Ala) + AMP + diphosphate. Functionally, catalyzes the attachment of alanine to tRNA(Ala) in a two-step reaction: alanine is first activated by ATP to form Ala-AMP and then transferred to the acceptor end of tRNA(Ala). Also edits incorrectly charged Ser-tRNA(Ala) and Gly-tRNA(Ala) via its editing domain. In Bartonella quintana (strain Toulouse) (Rochalimaea quintana), this protein is Alanine--tRNA ligase.